Here is a 797-residue protein sequence, read N- to C-terminus: Adhesion G-protein coupled receptor G7 (797 aa).

Positions 1–26 (MASCRAWNLRVLVAVVCGLLTGIILG) are cleaved as a signal peptide. At 27–438 (LGIWRIVIRI…QYPKSLDILS (412 aa)) the chain is on the extracellular side. N-linked (GlcNAc...) asparagine glycans are attached at residues Asn-82, Asn-159, Asn-178, Asn-191, Asn-247, Asn-261, Asn-312, Asn-316, and Asn-387. The GAIN-B domain occupies 275–428 (FSVQKGASSS…AVLMTFKKDY (154 aa)). Cystine bridges form between Cys-383/Cys-410 and Cys-398/Cys-412. Residues 383–428 (CVYWNLSAKDWDTYGCQKDKGTDGFLRCRCNHTTNFAVLMTFKKDY) are GPS. Asn-413 is a glycosylation site (N-linked (GlcNAc...) asparagine). A helical transmembrane segment spans residues 439-459 (NVGCALSVTGLALTVIFQIVT). Residues 460-468 (RKVRKTSVT) are Cytoplasmic-facing. A helical transmembrane segment spans residues 469–489 (WVLVNLCISMLIFNLLFVFGI). The Extracellular segment spans residues 490–528 (ENSNKNLQTSDGDINNIDFDNNDIPRTDTINIPNPMCTA). The helical transmembrane segment at 529-549 (IAALLHYFLLVTFTWNALSAA) threads the bilayer. The Cytoplasmic segment spans residues 550-565 (QLYYLLIRTMKPLPRH). A helical membrane pass occupies residues 566-586 (FILFISLIGWGVPAIVVAITV). Over 587–623 (GVIYSQNGNNPQWELDYRQEKICWLAIPEPNGVIKSP) the chain is Extracellular. Residues 624–644 (LLWSFIVPVTIILISNVVMFI) form a helical membrane-spanning segment. The Cytoplasmic portion of the chain corresponds to 645-669 (TISIKVLWKNNQNLTSTKKVSSMKK). A helical transmembrane segment spans residues 670–690 (IVSTLSVAVVFGITWILAYLM). Residues 691–698 (LVNDDSIR) are Extracellular-facing. The chain crosses the membrane as a helical span at residues 699–719 (IVFSYIFCLFNTTQGLQIFIL). Topologically, residues 720–797 (YTVRTKVFQS…SESDNAKESI (78 aa)) are cytoplasmic.

The protein belongs to the G-protein coupled receptor 2 family. Adhesion G-protein coupled receptor (ADGR) subfamily.

Its subcellular location is the membrane. In terms of biological role, orphan receptor. The sequence is that of Adhesion G-protein coupled receptor G7 (ADGRG7) from Homo sapiens (Human).